The sequence spans 719 residues: Phosphoribosylformylglycinamidine synthase subunit PurL (719 aa).

H47 is a catalytic residue. Positions 50 and 89 each coordinate ATP. Residue E91 participates in Mg(2+) binding. Residues 92–95 and R114 contribute to the substrate site; that span reads SHNH. Residue H93 is the Proton acceptor of the active site. Position 115 (D115) interacts with Mg(2+). Q238 provides a ligand contact to substrate. Residue D266 participates in Mg(2+) binding. 310–312 is a substrate binding site; that stretch reads ESQ. ATP is bound by residues D488 and G525. Mg(2+) is bound at residue N526. Residue S528 coordinates substrate.

This sequence belongs to the FGAMS family. In terms of assembly, monomer. Part of the FGAM synthase complex composed of 1 PurL, 1 PurQ and 2 PurS subunits.

Its subcellular location is the cytoplasm. The catalysed reaction is N(2)-formyl-N(1)-(5-phospho-beta-D-ribosyl)glycinamide + L-glutamine + ATP + H2O = 2-formamido-N(1)-(5-O-phospho-beta-D-ribosyl)acetamidine + L-glutamate + ADP + phosphate + H(+). The protein operates within purine metabolism; IMP biosynthesis via de novo pathway; 5-amino-1-(5-phospho-D-ribosyl)imidazole from N(2)-formyl-N(1)-(5-phospho-D-ribosyl)glycinamide: step 1/2. Its function is as follows. Part of the phosphoribosylformylglycinamidine synthase complex involved in the purines biosynthetic pathway. Catalyzes the ATP-dependent conversion of formylglycinamide ribonucleotide (FGAR) and glutamine to yield formylglycinamidine ribonucleotide (FGAM) and glutamate. The FGAM synthase complex is composed of three subunits. PurQ produces an ammonia molecule by converting glutamine to glutamate. PurL transfers the ammonia molecule to FGAR to form FGAM in an ATP-dependent manner. PurS interacts with PurQ and PurL and is thought to assist in the transfer of the ammonia molecule from PurQ to PurL. The sequence is that of Phosphoribosylformylglycinamidine synthase subunit PurL from Jannaschia sp. (strain CCS1).